The sequence spans 351 residues: Protein-glutamate methylesterase/protein-glutamine glutaminase 1 (351 aa).

The Response regulatory domain occupies 1–115; the sequence is MVDDSAVVRQ…KQFLTESADE (115 aa). 4-aspartylphosphate is present on aspartate 49. One can recognise a CheB-type methylesterase domain in the interval 161–351; it reads AQTTERIVAI…MAREIVTQLQ (191 aa). Active-site residues include serine 173, histidine 199, and aspartate 295.

The protein belongs to the CheB family. Post-translationally, phosphorylated by CheA. Phosphorylation of the N-terminal regulatory domain activates the methylesterase activity.

It is found in the cytoplasm. The enzyme catalyses [protein]-L-glutamate 5-O-methyl ester + H2O = L-glutamyl-[protein] + methanol + H(+). It catalyses the reaction L-glutaminyl-[protein] + H2O = L-glutamyl-[protein] + NH4(+). Functionally, involved in chemotaxis. Part of a chemotaxis signal transduction system that modulates chemotaxis in response to various stimuli. Catalyzes the demethylation of specific methylglutamate residues introduced into the chemoreceptors (methyl-accepting chemotaxis proteins or MCP) by CheR. Also mediates the irreversible deamidation of specific glutamine residues to glutamic acid. The sequence is that of Protein-glutamate methylesterase/protein-glutamine glutaminase 1 from Xanthomonas oryzae pv. oryzae (strain MAFF 311018).